We begin with the raw amino-acid sequence, 240 residues long: Ribonuclease HII (240 aa).

The 209-residue stretch at 7–215 folds into the RNase H type-2 domain; that stretch reads RYAIGIDEAG…LKRIAPGWYV (209 aa). A divalent metal cation is bound by residues Asp13, Glu14, and Asp112.

Belongs to the RNase HII family. Mn(2+) is required as a cofactor. Requires Mg(2+) as cofactor.

The protein resides in the cytoplasm. It carries out the reaction Endonucleolytic cleavage to 5'-phosphomonoester.. In terms of biological role, endonuclease that specifically degrades the RNA of RNA-DNA hybrids. This chain is Ribonuclease HII, found in Hyperthermus butylicus (strain DSM 5456 / JCM 9403 / PLM1-5).